Consider the following 539-residue polypeptide: Chaperonin GroEL (539 aa).

Residues 29–32 (TIGP), 86–90 (DGTTT), Gly-414, and Asp-493 contribute to the ATP site.

It belongs to the chaperonin (HSP60) family. Forms a cylinder of 14 subunits composed of two heptameric rings stacked back-to-back. Interacts with the co-chaperonin GroES.

The protein resides in the cytoplasm. It catalyses the reaction ATP + H2O + a folded polypeptide = ADP + phosphate + an unfolded polypeptide.. Functionally, together with its co-chaperonin GroES, plays an essential role in assisting protein folding. The GroEL-GroES system forms a nano-cage that allows encapsulation of the non-native substrate proteins and provides a physical environment optimized to promote and accelerate protein folding. This chain is Chaperonin GroEL, found in Staphylococcus aureus.